The primary structure comprises 403 residues: Alkaline protease 1 (403 aa).

The signal sequence occupies residues 1–21; sequence MQSIKRTLLLLGAVLPAVLAG. The propeptide occupies 22–121; sequence PIFPHRRAPT…VEEDQVWHLF (100 aa). The Inhibitor I9 domain occupies 36–120; it reads KYIVTFKSDV…AVEEDQVWHL (85 aa). One can recognise a Peptidase S8 domain in the interval 130 to 403; sequence PWGLGSISHK…PNLLAYNGNA (274 aa). Residues aspartate 162 and histidine 193 each act as charge relay system in the active site. N-linked (GlcNAc...) asparagine glycans are attached at residues asparagine 253 and asparagine 309. The active-site Charge relay system is the serine 349.

Belongs to the peptidase S8 family.

The protein localises to the secreted. The enzyme catalyses Hydrolysis of proteins with broad specificity, and of Bz-Arg-OEt &gt; Ac-Tyr-OEt. Does not hydrolyze peptide amides.. Functionally, secreted alkaline protease that allows assimilation of proteinaceous substrates. The sequence is that of Alkaline protease 1 (alp1) from Aspergillus flavus.